Consider the following 214-residue polypeptide: External core antigen (214 aa).

The N-terminal stretch at 1–19 (MQLFHLCLIISCTCPTVQA) is a signal peptide. The interval 25-27 (GWL) is HBEAG. A disordered region spans residues 165–214 (NAPILSTLPETTVVRRRDRGRSPRRRTPSPRRRRSQSPRRRRSQSRESQC). Positions 178 to 207 (VRRRDRGRSPRRRTPSPRRRRSQSPRRRRS) are enriched in basic residues. The 1; half-length repeat unit spans residues 186–192 (SPRRRTP). A 3 X 8 AA repeats of S-P-R-R-R-R-S-Q region spans residues 186 to 208 (SPRRRTPSPRRRRSQSPRRRRSQ). A propeptide spanning residues 186 to 214 (SPRRRTPSPRRRRSQSPRRRRSQSRESQC) is cleaved from the precursor. 2 tandem repeats follow at residues 193–200 (SPRRRRSQ) and 201–208 (SPRRRRSQ).

Belongs to the orthohepadnavirus precore antigen family. As to quaternary structure, homodimerizes. Phosphorylated. In terms of processing, cleaved by host furin.

It is found in the secreted. The protein resides in the host nucleus. Its function is as follows. May regulate immune response to the intracellular capsid in acting as a T-cell tolerogen, by having an immunoregulatory effect which prevents destruction of infected cells by cytotoxic T-cells. This immune regulation may predispose to chronicity during perinatal infections and prevent severe liver injury during adult infections. This chain is External core antigen, found in Homo sapiens (Human).